A 417-amino-acid chain; its full sequence is D-inositol 3-phosphate glycosyltransferase (417 aa).

1D-myo-inositol 3-phosphate is bound at residue H10. UDP-N-acetyl-alpha-D-glucosamine-binding positions include 16-17 (QP) and G24. 1D-myo-inositol 3-phosphate is bound by residues 21-26 (DAGGMN), K79, Y112, T136, and R156. UDP-N-acetyl-alpha-D-glucosamine is bound by residues R230, K235, and Q296. Residues Y305, R306, and A308 each contribute to the Mg(2+) site. E318 and E326 together coordinate UDP-N-acetyl-alpha-D-glucosamine. Residue T332 participates in Mg(2+) binding.

The protein belongs to the glycosyltransferase group 1 family. MshA subfamily. In terms of assembly, homodimer.

It carries out the reaction 1D-myo-inositol 3-phosphate + UDP-N-acetyl-alpha-D-glucosamine = 1D-myo-inositol 2-acetamido-2-deoxy-alpha-D-glucopyranoside 3-phosphate + UDP + H(+). Its function is as follows. Catalyzes the transfer of a N-acetyl-glucosamine moiety to 1D-myo-inositol 3-phosphate to produce 1D-myo-inositol 2-acetamido-2-deoxy-glucopyranoside 3-phosphate in the mycothiol biosynthesis pathway. This chain is D-inositol 3-phosphate glycosyltransferase, found in Actinosynnema mirum (strain ATCC 29888 / DSM 43827 / JCM 3225 / NBRC 14064 / NCIMB 13271 / NRRL B-12336 / IMRU 3971 / 101).